A 367-amino-acid chain; its full sequence is Peptide chain release factor 2 (367 aa).

At glutamine 247 the chain carries N5-methylglutamine.

This sequence belongs to the prokaryotic/mitochondrial release factor family. Methylated by PrmC. Methylation increases the termination efficiency of RF2.

The protein resides in the cytoplasm. In terms of biological role, peptide chain release factor 2 directs the termination of translation in response to the peptide chain termination codons UGA and UAA. This is Peptide chain release factor 2 from Caulobacter sp. (strain K31).